Here is a 938-residue protein sequence, read N- to C-terminus: Cyclin-dependent kinase-like 5 (938 aa).

The 285-residue stretch at 13 to 297 (FEILGVVGEG…TEQCLNHPTF (285 aa)) folds into the Protein kinase domain. ATP is bound by residues 19–27 (VGEGAYGVV) and Lys-42. The Proton acceptor role is filled by Asp-135. Disordered stretches follow at residues 298 to 348 (QTQR…DIQN), 382 to 566 (KTYQ…RHSK), 646 to 865 (SPQP…LTAQ), and 877 to 938 (HPLS…KWKQ). Composition is skewed to polar residues over residues 319–331 (ESST…QSTK) and 382–402 (KTYQ…NNNI). Position 407 is a phosphoserine (Ser-407). Over residues 407–417 (SPKEAKSKTEF) the composition is skewed to basic and acidic residues. Composition is skewed to polar residues over residues 434–462 (LKSS…QPSE), 473–482 (IPQSSRSPSY), and 494–548 (DSKS…SGRN). Residue Ser-479 is modified to Phosphoserine. 2 stretches are compositionally biased toward basic and acidic residues: residues 549 to 559 (NRNEGTLDSRR) and 679 to 704 (QKSE…RHLY). Position 720 is a phosphoserine (Ser-720). Over residues 728–748 (HENNVSTRVSSLPSDSSSGTN) the composition is skewed to polar residues. Residue Ser-761 is modified to Phosphoserine. Basic and acidic residues-rich tracts occupy residues 769-778 (DQLKEKEKQG) and 817-827 (RPKEWRPEKLS). Over residues 880-891 (SQATGGSSNIRQ) the composition is skewed to polar residues.

The protein belongs to the protein kinase superfamily. CMGC Ser/Thr protein kinase family. CDC2/CDKX subfamily. Interacts with MECP2. Autophosphorylated.

It is found in the nucleus. Its subcellular location is the cytoplasm. It localises to the cytoskeleton. The protein localises to the cilium basal body. The protein resides in the microtubule organizing center. It is found in the centrosome. The catalysed reaction is L-seryl-[protein] + ATP = O-phospho-L-seryl-[protein] + ADP + H(+). It catalyses the reaction L-threonyl-[protein] + ATP = O-phospho-L-threonyl-[protein] + ADP + H(+). Functionally, mediates phosphorylation of MECP2. May regulate ciliogenesis. The polypeptide is Cyclin-dependent kinase-like 5 (Mus musculus (Mouse)).